The following is a 206-amino-acid chain: FMN-dependent NADH:quinone oxidoreductase (206 aa).

FMN is bound by residues S10, 16–18 (SSS), 93–96 (MYNF), and 137–140 (TRGG).

It belongs to the azoreductase type 1 family. Homodimer. FMN serves as cofactor.

It catalyses the reaction 2 a quinone + NADH + H(+) = 2 a 1,4-benzosemiquinone + NAD(+). The enzyme catalyses N,N-dimethyl-1,4-phenylenediamine + anthranilate + 2 NAD(+) = 2-(4-dimethylaminophenyl)diazenylbenzoate + 2 NADH + 2 H(+). Its function is as follows. Quinone reductase that provides resistance to thiol-specific stress caused by electrophilic quinones. Also exhibits azoreductase activity. Catalyzes the reductive cleavage of the azo bond in aromatic azo compounds to the corresponding amines. In Psychromonas ingrahamii (strain DSM 17664 / CCUG 51855 / 37), this protein is FMN-dependent NADH:quinone oxidoreductase.